The primary structure comprises 894 residues: Phosphinomethylmalate isomerase (894 aa).

Residues C438, C504, and C507 each contribute to the [4Fe-4S] cluster site.

It belongs to the aconitase/IPM isomerase family. [4Fe-4S] cluster serves as cofactor.

The enzyme catalyses phosphinomethylmalate = phosphinomethylisomalate. The catalysed reaction is phosphinomethylmalate = 2-(phosphinatomethylidene)butanedioate + H2O. It catalyses the reaction 2-(phosphinatomethylidene)butanedioate + H2O = phosphinomethylisomalate. It functions in the pathway secondary metabolite biosynthesis; bialaphos biosynthesis. Isomerase involved in the biosynthesis of phosphinothricin tripeptide (PTT), also known as bialaphos (BA), a natural-product antibiotic and potent herbicide. Probably catalyzes the isomerization of phosphinomethylmalate to phosphinomethylisomalate. Shows no standard aconitase activity with citrate as a substrate and is not able to complement an acnA mutant. In Streptomyces viridochromogenes (strain DSM 40736 / JCM 4977 / BCRC 1201 / Tue 494), this protein is Phosphinomethylmalate isomerase.